Consider the following 207-residue polypeptide: Thymidylate kinase (207 aa).

A disordered region spans residues 11-49 (EGIDGSGKSTQARRLAEHLRDTGRDPLLTREPGGSPGAE). ATP is bound at residue 12–19 (GIDGSGKS). The span at 24 to 38 (RLAEHLRDTGRDPLL) shows a compositional bias: basic and acidic residues.

Belongs to the thymidylate kinase family.

The catalysed reaction is dTMP + ATP = dTDP + ADP. Phosphorylation of dTMP to form dTDP in both de novo and salvage pathways of dTTP synthesis. This chain is Thymidylate kinase, found in Dinoroseobacter shibae (strain DSM 16493 / NCIMB 14021 / DFL 12).